A 539-amino-acid polypeptide reads, in one-letter code: Capsid protein VP1 (539 aa).

The shell domain stretch occupies residues 1–221 (MKMASNDANP…FIFLVPPTVE (221 aa)). Positions 222-274 (SRTKPFTVPVLTVEEMSNSRFPIPLEKLYTGPSSAFVVQPQNGRCTTDGVLLG) are P1 sub-domain 1. The interval 222–539 (SRTKPFTVPV…GNGTGRRRAL (318 aa)) is protruding domain. The interval 275 to 417 (TTQLSAVNIC…SGRTGHNVHL (143 aa)) is P2 sub-domain. The interval 418–539 (APAVAPTFPG…GNGTGRRRAL (122 aa)) is P1 sub-domain 2.

It belongs to the caliciviridae capsid protein family. As to quaternary structure, homodimer. Homomultimer. Interacts with the minor capsid protein VP2. Interacts (via C-terminus) with host type I histo-blood group structures antigens at the surface of target cells. May be cleaved by host protease to generate soluble capsid protein. Assembled capsid cannot be cleaved.

It localises to the virion. The protein resides in the host cytoplasm. Its function is as follows. Capsid protein self assembles to form an icosahedral capsid with a T=3 symmetry, about 38 nm in diameter, and consisting of 180 capsid proteins. A smaller form of capsid with a diameter of 23 nm might be capsid proteins assembled as icosahedron with T=1 symmetry. The capsid encapsulates the genomic RNA and is decorated with VP2 proteins. Attaches virion to target cells by binding histo-blood group antigens (HBGAs) present on gastroduodenal epithelial cells. Functionally, the soluble capsid protein may play a role in viral immunoevasion. The polypeptide is Capsid protein VP1 (Homo sapiens (Human)).